Consider the following 607-residue polypeptide: MNLEELKKRQGKIRNFSIIAHIDHGKSTLADRILEKTETVSSREMQAQLLDSMDLERERGITIKLNAIELNYTAKDGETYIFHLIDTPGHVDFTYEVSRSLAACEGAILVVDAAQGIEAQTLANVYLALDNDLEIMPIINKIDLPAADPESVRTEIEDVIGLDASEAVLASAKAGIGIEEILEQIVEKVPAPTGDVTAPLKALIFDSVYDAYRGVILQVRVMDGVVKPGDKIQLMSNSKTFDVAEVGIFTPKAVGRDFLATGDVGYIAASIKTVQDTRVGDTVTLATNPAAEPLHGYKQMNPMVFAGLYPIESNKYNDLREALEKLQLNDASLQFEPETSQALGFGFRCGFLGLLHMDVIQERLEREFNIDLIMTAPSVIYKVNLTDGESMDVSNPSEFPDPTKIATIEEPYVKAQIMVPQEFVGAVMELAQRKRGDFVTMDYIDDNRVNVIYQIPLAEIVFDFFDKLKSSTRGYASFDYELSEYRPSKLVKMDILLNGDKVDALSFIVHKDFAYERGKLIVDKLKKIIPRQQFEVPIQAAIGHKIVARTDIKALRKNVLAKCYGGDVSRKRKLLEKQKAGKKRMKSIGSVEVPQEAFLSVLSMDEE.

The tr-type G domain maps to 11–193 (GKIRNFSIIA…QIVEKVPAPT (183 aa)). GTP is bound by residues 23–28 (DHGKST) and 140–143 (NKID).

It belongs to the TRAFAC class translation factor GTPase superfamily. Classic translation factor GTPase family. LepA subfamily.

It localises to the cell membrane. It catalyses the reaction GTP + H2O = GDP + phosphate + H(+). In terms of biological role, required for accurate and efficient protein synthesis under certain stress conditions. May act as a fidelity factor of the translation reaction, by catalyzing a one-codon backward translocation of tRNAs on improperly translocated ribosomes. Back-translocation proceeds from a post-translocation (POST) complex to a pre-translocation (PRE) complex, thus giving elongation factor G a second chance to translocate the tRNAs correctly. Binds to ribosomes in a GTP-dependent manner. The polypeptide is Elongation factor 4 (Streptococcus pneumoniae (strain JJA)).